The chain runs to 428 residues: Adenylosuccinate synthetase (428 aa).

Residues glycine 12 to lysine 18 and glycine 40 to threonine 42 contribute to the GTP site. Aspartate 13 (proton acceptor) is an active-site residue. Mg(2+)-binding residues include aspartate 13 and glycine 40. Residues aspartate 13 to lysine 16, asparagine 38 to histidine 41, threonine 130, arginine 144, glutamine 225, threonine 240, and arginine 304 each bind IMP. The active-site Proton donor is the histidine 41. Substrate is bound at residue valine 300–arginine 306. Residues arginine 306, lysine 332–aspartate 334, and glycine 414–glycine 416 contribute to the GTP site.

The protein belongs to the adenylosuccinate synthetase family. As to quaternary structure, homodimer. Mg(2+) serves as cofactor.

It is found in the cytoplasm. It catalyses the reaction IMP + L-aspartate + GTP = N(6)-(1,2-dicarboxyethyl)-AMP + GDP + phosphate + 2 H(+). It functions in the pathway purine metabolism; AMP biosynthesis via de novo pathway; AMP from IMP: step 1/2. Its function is as follows. Plays an important role in the de novo pathway of purine nucleotide biosynthesis. Catalyzes the first committed step in the biosynthesis of AMP from IMP. This Clostridium botulinum (strain Alaska E43 / Type E3) protein is Adenylosuccinate synthetase.